The primary structure comprises 478 residues: Trigger factor (478 aa).

A disordered region spans residues 1–41 (MAELADAPDLGSGARKGVRVRLPPPAPHKNGGKNESRGSGQ). Residues 197–279 (GDMLVVEYEV…IKEIKKKVLP (83 aa)) enclose the PPIase FKBP-type domain. Residues 455-472 (VEQKQEEEKKEEKEEVKN) are compositionally biased toward basic and acidic residues. The disordered stretch occupies residues 455–478 (VEQKQEEEKKEEKEEVKNESQGNT).

The protein belongs to the FKBP-type PPIase family. Tig subfamily.

It is found in the cytoplasm. It carries out the reaction [protein]-peptidylproline (omega=180) = [protein]-peptidylproline (omega=0). Functionally, involved in protein export. Acts as a chaperone by maintaining the newly synthesized protein in an open conformation. Functions as a peptidyl-prolyl cis-trans isomerase. This chain is Trigger factor, found in Aquifex aeolicus (strain VF5).